The chain runs to 115 residues: Large ribosomal subunit protein bL19 (115 aa).

The protein belongs to the bacterial ribosomal protein bL19 family.

In terms of biological role, this protein is located at the 30S-50S ribosomal subunit interface and may play a role in the structure and function of the aminoacyl-tRNA binding site. This Citrobacter koseri (strain ATCC BAA-895 / CDC 4225-83 / SGSC4696) protein is Large ribosomal subunit protein bL19.